A 113-amino-acid polypeptide reads, in one-letter code: N-alpha-acetyltransferase 38-A, NatC auxiliary subunit (113 aa).

The disordered stretch occupies residues 1–29 (MAAVLEENGCSRQSSPSAGDSDAEPGDTA). Residues 28-106 (TARHKLESLL…IVSIQVELES (79 aa)) enclose the Sm domain.

It belongs to the snRNP Sm proteins family. As to quaternary structure, component of the N-terminal acetyltransferase C (NatC) complex, which is composed of naa35, naa38 and naa30.

It localises to the cytoplasm. Its function is as follows. Auxillary component of the N-terminal acetyltransferase C (NatC) complex which catalyzes acetylation of N-terminal methionine residues. In Xenopus laevis (African clawed frog), this protein is N-alpha-acetyltransferase 38-A, NatC auxiliary subunit (naa38-a).